The sequence spans 440 residues: Transposon Ty1-DR1 Gag polyprotein (440 aa).

Composition is skewed to polar residues over residues 1-10, 48-60, and 127-152; these read MESQQLSNYP, TKAN…TPAS, and QSQF…GNTF. Disordered regions lie at residues 1-93, 126-173, and 352-440; these read MESQ…MMTQ, PQSQ…RPPP, and GSRN…PGTY. Low complexity predominate over residues 153–165; it reads TDSSSADSDMTST. Residues 299-401 are RNA-binding; it reads NNGIHINNKV…NSKSKTARAH (103 aa). Residues 402-418 show a composition bias toward low complexity; the sequence is NVSTSNNSPSTDNDSIS. Ser-416 carries the phosphoserine modification. Positions 419–428 are enriched in polar residues; that stretch reads KSTTEPIQLN. Positions 429–440 are enriched in basic and acidic residues; sequence NKHDLHLRPGTY.

Homotrimer.

The protein localises to the cytoplasm. Functionally, capsid protein (CA) is the structural component of the virus-like particle (VLP), forming the shell that encapsulates the retrotransposons dimeric RNA genome. The particles are assembled from trimer-clustered units and there are holes in the capsid shells that allow for the diffusion of macromolecules. CA also has nucleocapsid-like chaperone activity, promoting primer tRNA(i)-Met annealing to the multipartite primer-binding site (PBS), dimerization of Ty1 RNA and initiation of reverse transcription. This chain is Transposon Ty1-DR1 Gag polyprotein (TY1A-DR1), found in Saccharomyces cerevisiae (strain ATCC 204508 / S288c) (Baker's yeast).